We begin with the raw amino-acid sequence, 662 residues long: Histone-lysine N-methyltransferase SET9 (662 aa).

Residues 114–228 form the SET domain; the sequence is CPFEVTTTNR…EGDEITVSYG (115 aa). Disordered regions lie at residues 252–418 and 627–662; these read WAPM…DEHH and ESIR…RKTM. Acidic residues predominate over residues 260 to 271; the sequence is DSDDEDMEEAES. The segment covering 279–289 has biased composition (low complexity); the sequence is ATSSGTATSGG. Basic and acidic residues predominate over residues 323–333; it reads RASDHLREATL. Composition is skewed to polar residues over residues 356-370, 382-395, and 402-411; these read ANIN…QDIR, LDET…TPQS, and PKSSHSTDAT. The span at 627–640 shows a compositional bias: basic and acidic residues; the sequence is ESIRERFSTPRSGR. The span at 653 to 662 shows a compositional bias: basic residues; it reads RKRRRVRKTM.

The protein belongs to the class V-like SAM-binding methyltransferase superfamily. Histone-lysine methyltransferase family. Suvar4-20 subfamily.

The protein resides in the nucleus. Its subcellular location is the chromosome. It catalyses the reaction L-lysyl(20)-[histone H4] + 3 S-adenosyl-L-methionine = N(6),N(6),N(6)-trimethyl-L-lysyl(20)-[histone H4] + 3 S-adenosyl-L-homocysteine + 3 H(+). Its function is as follows. Histone methyltransferase that trimethylates 'Lys-20' of histone H4 to form H4K20me3. In Phaeosphaeria nodorum (strain SN15 / ATCC MYA-4574 / FGSC 10173) (Glume blotch fungus), this protein is Histone-lysine N-methyltransferase SET9 (SET9).